The chain runs to 213 residues: Amelogenin, X isoform (213 aa).

The N-terminal stretch at 1–16 is a signal peptide; sequence MGTWILFACLLGAAFS. Position 32 is a phosphoserine (Ser32). 2 stretches are compositionally biased toward low complexity: residues 96 to 105 and 114 to 160; these read VPQQPMMPVP and QHHQ…QPLQ. The disordered stretch occupies residues 96-213; it reads VPQQPMMPVP…TDKTKREEVD (118 aa). Positions 161-194 are enriched in pro residues; that stretch reads PLQPQPPVHPIQPLPPQPPLPPIFPMQPLPPMLP.

This sequence belongs to the amelogenin family. As to quaternary structure, interacts with KRT5. Phosphorylated by FAM20C in vitro.

It is found in the secreted. The protein resides in the extracellular space. It localises to the extracellular matrix. Plays a role in the biomineralization of teeth. Seems to regulate the formation of crystallites during the secretory stage of tooth enamel development. Thought to play a major role in the structural organization and mineralization of developing enamel. The protein is Amelogenin, X isoform (AMELX) of Bos taurus (Bovine).